The chain runs to 458 residues: MARRLFGTDGVRGVANVHPMTAEMALQLGRALAYIVRSGPHRHRIVIGKDTRLSGYMLEQAIASGICSMGVDVMLCGPLPTPGIAFVTHSMRADAGVVISASHNPYQDNGIKFFSRDGFKLPDELELQIERLVLDAGEDDAGAEEFRALRPTATRIGKAKRIDDAIGRYAQFLKTIFPKELTLDGLTVVVDCAHGAAYHVAPAVFEELGAKVIPLNVKPDGKNINDACGAVHPESMARAVKRHGANLGLALDGDADRVILADEHGNVVDGDAIMALVGRDLLARKALAKRTVVATVMSNLGLERALAPLGGKVVRTAVGDRYVVEEMRRSGYSFGGEQSGHLVFLDHVTTGDGVAAGLNVLAVMVREGKPLSELARCFEPFPQALVNVEVREKRPVAELPGVAKAIAAAEKALGAEGRVLVRPSGTENKVRVLVEGPDAKRARALADGIAAELRQAIG.

Residue Ser102 is the Phosphoserine intermediate of the active site. Residues Ser102, Asp252, Asp254, and Asp256 each contribute to the Mg(2+) site. A Phosphoserine modification is found at Ser102.

This sequence belongs to the phosphohexose mutase family. Requires Mg(2+) as cofactor. Activated by phosphorylation.

It catalyses the reaction alpha-D-glucosamine 1-phosphate = D-glucosamine 6-phosphate. In terms of biological role, catalyzes the conversion of glucosamine-6-phosphate to glucosamine-1-phosphate. The protein is Phosphoglucosamine mutase of Anaeromyxobacter dehalogenans (strain 2CP-C).